The primary structure comprises 168 residues: Pheromone-binding protein (168 aa).

A signal peptide spans 1–26; it reads MNKTTTKMKVAVVAIVVYLAVGNVDS. Intrachain disulfides connect cysteine 45/cysteine 80, cysteine 76/cysteine 134, and cysteine 123/cysteine 143.

Belongs to the PBP/GOBP family. As to quaternary structure, homodimer. As to expression, antenna.

Functionally, this major soluble protein in olfactory sensilla of male moths might serve to solubilize the extremely hydrophobic pheromone molecules and to transport pheromone through the aqueous lymph to receptors located on olfactory cilia. PBP is also found in sensilla from female M.sexta antennae. This chain is Pheromone-binding protein, found in Manduca sexta (Tobacco hawkmoth).